The sequence spans 198 residues: MSKVLILKSSILGGYSQSAVLIDHLASHWETQGAAITVRDLGGKDVLPMVDGEIASGLRGGAELSARQQEMLALSDTLVAELKANDTIVIAAPMYNFTIPAQLKNWIDFIARAGVTFTYTETGPKGLVEGKRAVLVTTRGGAHKDGPTDHVVPYLKTVLGFIGITNVEVVYAEALNMGPEAHDKGMSEAKHSIDQLKA.

FMN is bound by residues S10, S16 to S18, M94 to F97, and T138 to G141.

This sequence belongs to the azoreductase type 1 family. As to quaternary structure, homodimer. The cofactor is FMN.

The catalysed reaction is 2 a quinone + NADH + H(+) = 2 a 1,4-benzosemiquinone + NAD(+). The enzyme catalyses N,N-dimethyl-1,4-phenylenediamine + anthranilate + 2 NAD(+) = 2-(4-dimethylaminophenyl)diazenylbenzoate + 2 NADH + 2 H(+). Its function is as follows. Quinone reductase that provides resistance to thiol-specific stress caused by electrophilic quinones. Also exhibits azoreductase activity. Catalyzes the reductive cleavage of the azo bond in aromatic azo compounds to the corresponding amines. The polypeptide is FMN-dependent NADH:quinone oxidoreductase (Shewanella baltica (strain OS195)).